We begin with the raw amino-acid sequence, 505 residues long: Catalase (505 aa).

Active-site residues include histidine 56 and asparagine 129. Position 339 (tyrosine 339) interacts with heme.

Belongs to the catalase family. Requires heme as cofactor.

It localises to the cytoplasm. The catalysed reaction is 2 H2O2 = O2 + 2 H2O. In terms of biological role, decomposes hydrogen peroxide into water and oxygen; serves to protect cells from the toxic effects of hydrogen peroxide. The protein is Catalase (katA) of Helicobacter pylori (strain ATCC 700392 / 26695) (Campylobacter pylori).